We begin with the raw amino-acid sequence, 1033 residues long: Isoleucine--tRNA ligase (1033 aa).

Residues 47 to 57 carry the 'HIGH' region motif; it reads PTANGLPHVGH. The short motif at 590 to 594 is the 'KMSKS' region element; the sequence is KMSKS. Residue Lys593 coordinates ATP.

This sequence belongs to the class-I aminoacyl-tRNA synthetase family. IleS type 2 subfamily. As to quaternary structure, monomer. Requires Zn(2+) as cofactor.

The protein localises to the cytoplasm. The catalysed reaction is tRNA(Ile) + L-isoleucine + ATP = L-isoleucyl-tRNA(Ile) + AMP + diphosphate. In terms of biological role, catalyzes the attachment of isoleucine to tRNA(Ile). As IleRS can inadvertently accommodate and process structurally similar amino acids such as valine, to avoid such errors it has two additional distinct tRNA(Ile)-dependent editing activities. One activity is designated as 'pretransfer' editing and involves the hydrolysis of activated Val-AMP. The other activity is designated 'posttransfer' editing and involves deacylation of mischarged Val-tRNA(Ile). The sequence is that of Isoleucine--tRNA ligase from Bacillus thuringiensis (strain Al Hakam).